The sequence spans 382 residues: Histidinol-phosphate aminotransferase (382 aa).

The disordered stretch occupies residues 1–24 (MTSAPRPRPTLDDLPLREDLRGKS). Positions 9 to 22 (PTLDDLPLREDLRG) are enriched in basic and acidic residues. Lys-233 carries the N6-(pyridoxal phosphate)lysine modification.

Belongs to the class-II pyridoxal-phosphate-dependent aminotransferase family. Histidinol-phosphate aminotransferase subfamily. Homodimer. The cofactor is pyridoxal 5'-phosphate.

It carries out the reaction L-histidinol phosphate + 2-oxoglutarate = 3-(imidazol-4-yl)-2-oxopropyl phosphate + L-glutamate. It functions in the pathway amino-acid biosynthesis; L-histidine biosynthesis; L-histidine from 5-phospho-alpha-D-ribose 1-diphosphate: step 7/9. The protein is Histidinol-phosphate aminotransferase of Mycobacterium ulcerans (strain Agy99).